Reading from the N-terminus, the 208-residue chain is Probable very-long-chain (3R)-3-hydroxyacyl-CoA dehydratase (208 aa).

At 1 to 11 (MSKILKIQYLK) the chain is on the cytoplasmic side. A helical transmembrane segment spans residues 12–35 (LYNVISCFLWMSVLLRTGLIWGIT). Topologically, residues 36–46 (KDTAVVFHETN) are lumenal. A helical transmembrane segment spans residues 47–67 (TLVRWVQTLAIAEVFHSIFGL). Topologically, residues 68 to 78 (VSSSPLTTIIQ) are cytoplasmic. Residues 79–97 (VASRLYLVWGVCYPFSYVI) form a helical membrane-spanning segment. Over 98 to 102 (EGSPI) the chain is Lumenal. The helical transmembrane segment at 103–123 (YLSMIIAWSITEIIRYAFYAF) threads the bilayer. At 124–134 (NLNGDIPAFLT) the chain is on the cytoplasmic side. Residues 135–157 (WLRYNTFLILYPIGAGSEFLLVL) traverse the membrane as a helical segment. Residues Y145 and E152 contribute to the active site. At 158-171 (KSRIAAQYVWSLNK) the chain is on the lumenal side. A helical transmembrane segment spans residues 172–192 (LLWPILMSIYPPGLYIMYTHM). Residues 193–208 (LAQRRKISKRAAARRT) lie on the Cytoplasmic side of the membrane.

This sequence belongs to the very long-chain fatty acids dehydratase HACD family.

The protein localises to the endoplasmic reticulum membrane. The catalysed reaction is a very-long-chain (3R)-3-hydroxyacyl-CoA = a very-long-chain (2E)-enoyl-CoA + H2O. The protein operates within lipid metabolism; fatty acid biosynthesis. In terms of biological role, catalyzes the third of the four reactions of the long-chain fatty acids elongation cycle. This endoplasmic reticulum-bound enzymatic process, allows the addition of two carbons to the chain of long- and very long-chain fatty acids/VLCFAs per cycle. This enzyme catalyzes the dehydration of the 3-hydroxyacyl-CoA intermediate into trans-2,3-enoyl-CoA, within each cycle of fatty acid elongation. Thereby, it participates in the production of VLCFAs of different chain lengths that are involved in multiple biological processes as precursors of membrane lipids and lipid mediators. The protein is Probable very-long-chain (3R)-3-hydroxyacyl-CoA dehydratase of Schizosaccharomyces pombe (strain 972 / ATCC 24843) (Fission yeast).